The primary structure comprises 218 residues: Ropporin-1-like protein (218 aa).

In terms of domain architecture, RIIa spans 17 to 54; the sequence is PALPNMLKQFTKAAIRTQPRDVLQWAADYFSALSKGQD. Positions 199 to 218 are disordered; the sequence is QSQGGMVQPSNFTSLHTAEK.

It belongs to the ropporin family. As to quaternary structure, component of axonemal radial spoke complexes.

Its subcellular location is the cell projection. The protein localises to the cilium. It is found in the flagellum. Functions as part of axonemal radial spoke complexes that play an important part in the motility of sperm and cilia. Important for male fertility. Involved in fibrous sheath integrity and sperm motility, plays a role in PKA-dependent signaling processes required for spermatozoa capacitation. This Danio rerio (Zebrafish) protein is Ropporin-1-like protein (ropn1l).